The chain runs to 282 residues: 4-deoxy-L-threo-5-hexosulose-uronate ketol-isomerase 2 (282 aa).

Zn(2+)-binding residues include His200, His202, Glu207, and His249.

This sequence belongs to the KduI family. The cofactor is Zn(2+).

It carries out the reaction 5-dehydro-4-deoxy-D-glucuronate = 3-deoxy-D-glycero-2,5-hexodiulosonate. It functions in the pathway glycan metabolism; pectin degradation; 2-dehydro-3-deoxy-D-gluconate from pectin: step 4/5. In terms of biological role, catalyzes the isomerization of 5-dehydro-4-deoxy-D-glucuronate to 3-deoxy-D-glycero-2,5-hexodiulosonate. This is 4-deoxy-L-threo-5-hexosulose-uronate ketol-isomerase 2 (kduI2) from Rhizobium meliloti (strain 1021) (Ensifer meliloti).